Consider the following 101-residue polypeptide: STAS-domain containing protein PA14_20770 (101 aa).

The 88-residue stretch at 14 to 101 (LTIQIQGRFD…SNFEQLFKIS (88 aa)) folds into the STAS domain.

Phosphorylated on a serine residue, possibly on Ser-56.

It is found in the secreted. This is STAS-domain containing protein PA14_20770 from Pseudomonas aeruginosa (strain UCBPP-PA14).